The chain runs to 306 residues: Pantothenate kinase (306 aa).

Position 91 to 98 (91 to 98) interacts with ATP; it reads GSVAVGKS.

The protein belongs to the prokaryotic pantothenate kinase family.

It localises to the cytoplasm. It carries out the reaction (R)-pantothenate + ATP = (R)-4'-phosphopantothenate + ADP + H(+). It functions in the pathway cofactor biosynthesis; coenzyme A biosynthesis; CoA from (R)-pantothenate: step 1/5. The protein is Pantothenate kinase (coaA) of Streptococcus pyogenes serotype M1.